Here is a 318-residue protein sequence, read N- to C-terminus: Sol locus transcriptional repressor (318 aa).

4 TPR repeats span residues 65-98, 99-132, 133-166, and 167-199; these read ANAY…RPKT, INDV…QPNV, GISY…GSTN, and SVYR…EPEK.

In terms of biological role, transcriptional repressor of the sol locus (adhE/aad, ctfA, ctfB and adc) genes for butanol and acetone formation. This Clostridium acetobutylicum (strain ATCC 824 / DSM 792 / JCM 1419 / IAM 19013 / LMG 5710 / NBRC 13948 / NRRL B-527 / VKM B-1787 / 2291 / W) protein is Sol locus transcriptional repressor (solR).